The primary structure comprises 161 residues: HMG1/2-like protein (161 aa).

3 disordered regions span residues 1–46 (MKGA…KRAP), 60–91 (FKQKNPKNKSVAAVGKAAGERWKSLSESEKAP), and 113–161 (GESA…DDDE). Composition is skewed to basic and acidic residues over residues 10-27 (AKADAKLAVKSKGAEKPA) and 77-89 (AGERWKSLSESEK). The HMG box DNA-binding region spans 42 to 111 (PKRAPSAFFV…EYNKAIAAYN (70 aa)). The span at 114–123 (ESAAAAAPKK) shows a compositional bias: low complexity. The segment covering 145–161 (NDDDDDEGSDEDEDDDE) has biased composition (acidic residues).

It belongs to the HMGB family.

It is found in the nucleus. This chain is HMG1/2-like protein, found in Triticum aestivum (Wheat).